A 220-amino-acid chain; its full sequence is MERYAAALEEVADGARQQERHYQLLSALQSLVKELPSSFQQRLSYTTLSDLALALLDGTVFEIVQGLLEIQHLTEKSLYNQRLRLQNEHRVLRQALRQKHQEAQQACRPHNLPVVQAAQQRELEAVEHRIREEQRAMDQKIILELDRKVADQQSTLEKAGVAGFYVTTNPQELMLQMNLLELIRKLQQRGCRAGNAALGLGGPWQSPAAQCDQKGSPVPP.

A coiled-coil region spans residues 76 to 159 (KSLYNQRLRL…ADQQSTLEKA (84 aa)).

This sequence belongs to the gonadal family. As to expression, widely expressed in fetal and adult tissues. Highest expression in liver, heart and skeletal muscle. Lower levels in pancreas and placenta. Weak expression in brain.

It is found in the nucleus. In terms of biological role, may play a role in neural crest cell migration into the third and fourth pharyngeal pouches. The polypeptide is Protein DGCR6L (DGCR6L) (Homo sapiens (Human)).